Consider the following 467-residue polypeptide: MVITEMTPRNTIAAIATAIVPQQGSVGIVRMSGSEAMKIAQTLFHAPGKQVWETHHILYGYIRHPHTGQLVDETLLLIMKAPRSYTREDVVEFHCHGGIIAIQQVLQLCIEAGAELAQPGEFTLRAFLNGRLDLTQAESIAELVGSQSPAAAQVALAGLQGKLASPIRHLRACCLDILAEIEARIDFEEDLPPLDESEISQKLDDILVDLSMVLATASRGELLRTGLKVAIIGRPNVGKSSLLNAWSHSDRAIVTDLPGTTRDVVESQLVVGGIPVQVLDTAGIRETEDRVEKIGVERSCQAAESADIVLLTIDAQVGWTELDEVIYQQVKHRFLILIINKVDQVDLVHSELIRSIFYPETIKNVVATAAINNQGIEELEAAILNAVNLDNVQPENLDFAVNQRQAAALTRAKIALEQCLNTIKNNLPLDFWTIDLRGSIYALGEVTGEDVTESVLDIIFSRFCIGK.

(6S)-5-formyl-5,6,7,8-tetrahydrofolate-binding residues include Arg30, Glu92, and Arg131. In terms of domain architecture, TrmE-type G spans 226–388 (GLKVAIIGRP…LEAAILNAVN (163 aa)). Residue Asn236 coordinates K(+). Residues 236-241 (NVGKSS), 255-261 (TDLPGTT), and 280-283 (DTAG) each bind GTP. Ser240 is a Mg(2+) binding site. K(+) contacts are provided by Thr255, Leu257, and Thr260. Mg(2+) is bound at residue Thr261. Lys467 serves as a coordination point for (6S)-5-formyl-5,6,7,8-tetrahydrofolate.

The protein belongs to the TRAFAC class TrmE-Era-EngA-EngB-Septin-like GTPase superfamily. TrmE GTPase family. Homodimer. Heterotetramer of two MnmE and two MnmG subunits. The cofactor is K(+).

It is found in the cytoplasm. Exhibits a very high intrinsic GTPase hydrolysis rate. Involved in the addition of a carboxymethylaminomethyl (cmnm) group at the wobble position (U34) of certain tRNAs, forming tRNA-cmnm(5)s(2)U34. In Trichodesmium erythraeum (strain IMS101), this protein is tRNA modification GTPase MnmE.